Consider the following 224-residue polypeptide: UPF0758 protein PM1152 (224 aa).

The MPN domain maps to 102–224 (AFKNSENVRF…YYSFAENRLL (123 aa)). Zn(2+)-binding residues include histidine 173, histidine 175, and aspartate 186. The short motif at 173–186 (HNHPSGNPEPSASD) is the JAMM motif element.

It belongs to the UPF0758 family.

This Pasteurella multocida (strain Pm70) protein is UPF0758 protein PM1152.